The primary structure comprises 365 residues: MRVLAAMSGGVDSAVAAARAVDAGHEVVGVHMALNRSPGTLRTGSRGCCTIEDALDARRAADLLGIPFYVWDLSEDFVEDVVADFVAEYAAGRTPNPCVRCNERIKFAALLDKGIALGFDAVATGHYARVVTGPDGRAELHRAADAAKDQSYVLAVLDADQVAHAMFPLGDAPTKAEVRAEAERRGLPVASKPDSHDICFIPDGDTRGFLADKLGEVPGEVVDESGEVLGTHTGTYGYTVGQRKGLGISRPAADGRPRYVLSIEPVRRTVTVGPAERLSVGALEAVEAVWNADAPVGPVEVHVQVRAHGEPVPAVAELTGPADDPVLRVRLRTPLSGVAPGQTVAVYRGTRVLGSATISGTTPLS.

ATP is bound by residues 6–13 (AMSGGVDS) and M32. Residue C101 is the Nucleophile of the active site. C101 and C199 form a disulfide bridge. Position 125 (G125) interacts with ATP. The segment at 148-150 (KDQ) is interaction with tRNA. C199 (cysteine persulfide intermediate) is an active-site residue.

It belongs to the MnmA/TRMU family.

Its subcellular location is the cytoplasm. It carries out the reaction S-sulfanyl-L-cysteinyl-[protein] + uridine(34) in tRNA + AH2 + ATP = 2-thiouridine(34) in tRNA + L-cysteinyl-[protein] + A + AMP + diphosphate + H(+). Its function is as follows. Catalyzes the 2-thiolation of uridine at the wobble position (U34) of tRNA, leading to the formation of s(2)U34. The chain is tRNA-specific 2-thiouridylase MnmA from Kineococcus radiotolerans (strain ATCC BAA-149 / DSM 14245 / SRS30216).